Consider the following 228-residue polypeptide: Large ribosomal subunit protein uL1 (228 aa).

It belongs to the universal ribosomal protein uL1 family. As to quaternary structure, part of the 50S ribosomal subunit.

Binds directly to 23S rRNA. The L1 stalk is quite mobile in the ribosome, and is involved in E site tRNA release. Functionally, protein L1 is also a translational repressor protein, it controls the translation of the L11 operon by binding to its mRNA. The chain is Large ribosomal subunit protein uL1 from Clavibacter michiganensis subsp. michiganensis (strain NCPPB 382).